Here is a 301-residue protein sequence, read N- to C-terminus: Probable alpha-L-glutamate ligase (301 aa).

An ATP-grasp domain is found at 104-287; that stretch reads LQILARKGIG…VAGKIIEYLE (184 aa). Residues lysine 141, 178–179, aspartate 187, and 211–213 each bind ATP; these read EY and RSN. Mg(2+)-binding residues include aspartate 248, glutamate 260, and asparagine 262. Residues aspartate 248, glutamate 260, and asparagine 262 each coordinate Mn(2+).

Belongs to the RimK family. The cofactor is Mg(2+). Mn(2+) serves as cofactor.

The protein is Probable alpha-L-glutamate ligase of Picosynechococcus sp. (strain ATCC 27264 / PCC 7002 / PR-6) (Agmenellum quadruplicatum).